Here is a 931-residue protein sequence, read N- to C-terminus: Dymeclin (931 aa).

Disordered stretches follow at residues 1–53 (MGVA…SSTT), 599–618 (SPSKINTNNSNNNVKDNTNN), and 839–931 (DANN…EKTN). The N-myristoyl glycine moiety is linked to residue Gly2. Low complexity-rich tracts occupy residues 27–49 (NNNKNNNNNNNNNNNNNNNNNNN) and 601–618 (SKINTNNSNNNVKDNTNN). The segment covering 839-858 (DANNFTPKKQLSSDQLHSPP) has biased composition (polar residues). Composition is skewed to low complexity over residues 859 to 876 (TNTTTTTTTTTNSTSSNT) and 889 to 901 (QLQQQNNLRNQEQ). Polar residues predominate over residues 919-931 (TTGVELSSTEKTN).

It belongs to the dymeclin family.

This Dictyostelium discoideum (Social amoeba) protein is Dymeclin (dym).